Reading from the N-terminus, the 383-residue chain is Ribosomal RNA large subunit methyltransferase G (383 aa).

This sequence belongs to the methyltransferase superfamily. RlmG family.

Its subcellular location is the cytoplasm. The enzyme catalyses guanosine(1835) in 23S rRNA + S-adenosyl-L-methionine = N(2)-methylguanosine(1835) in 23S rRNA + S-adenosyl-L-homocysteine + H(+). Functionally, specifically methylates the guanine in position 1835 (m2G1835) of 23S rRNA. In Vibrio atlanticus (strain LGP32) (Vibrio splendidus (strain Mel32)), this protein is Ribosomal RNA large subunit methyltransferase G.